The primary structure comprises 541 residues: Chaperonin GroEL (541 aa).

ATP is bound by residues 29–32 (TLGP), 86–90 (DGTTT), glycine 413, 476–478 (NAA), and aspartate 492.

Belongs to the chaperonin (HSP60) family. In terms of assembly, forms a cylinder of 14 subunits composed of two heptameric rings stacked back-to-back. Interacts with the co-chaperonin GroES.

It localises to the cytoplasm. The enzyme catalyses ATP + H2O + a folded polypeptide = ADP + phosphate + an unfolded polypeptide.. Functionally, together with its co-chaperonin GroES, plays an essential role in assisting protein folding. The GroEL-GroES system forms a nano-cage that allows encapsulation of the non-native substrate proteins and provides a physical environment optimized to promote and accelerate protein folding. The sequence is that of Chaperonin GroEL from Streptococcus equi subsp. equi (strain 4047).